Reading from the N-terminus, the 237-residue chain is 2-C-methyl-D-erythritol 4-phosphate cytidylyltransferase (237 aa).

This sequence belongs to the IspD/TarI cytidylyltransferase family. IspD subfamily.

It carries out the reaction 2-C-methyl-D-erythritol 4-phosphate + CTP + H(+) = 4-CDP-2-C-methyl-D-erythritol + diphosphate. Its pathway is isoprenoid biosynthesis; isopentenyl diphosphate biosynthesis via DXP pathway; isopentenyl diphosphate from 1-deoxy-D-xylulose 5-phosphate: step 2/6. Its function is as follows. Catalyzes the formation of 4-diphosphocytidyl-2-C-methyl-D-erythritol from CTP and 2-C-methyl-D-erythritol 4-phosphate (MEP). This Acidithiobacillus ferrooxidans (strain ATCC 23270 / DSM 14882 / CIP 104768 / NCIMB 8455) (Ferrobacillus ferrooxidans (strain ATCC 23270)) protein is 2-C-methyl-D-erythritol 4-phosphate cytidylyltransferase.